The chain runs to 131 residues: Nuclear envelope phosphatase-regulatory subunit 1 homolog (131 aa).

The next 2 helical transmembrane spans lie at 33–53 (LLAV…WYWL) and 68–88 (WIHP…ILGI).

It belongs to the CNEP1R1 family.

The protein resides in the nucleus membrane. It is found in the cytoplasm. Functionally, may form with the serine/threonine protein phosphatase l(1)G0269 an active complex dephosphorylating and activating lipin-like phosphatases. Lipins are phosphatidate phosphatases that catalyze the conversion of phosphatidic acid to diacylglycerol and control the metabolism of fatty acids at different levels. This is Nuclear envelope phosphatase-regulatory subunit 1 homolog from Drosophila melanogaster (Fruit fly).